The chain runs to 368 residues: MKLSGVELRRVQMPLVAPFRTSFGTQSVRELLLLRAVTPAGEGWGECVTMAGPLYSSEYNDGAEHVLRHYLIPALLAAEDITAAKVTPLLAKFKGHRMAKGALEMAVLDAELRAHERSFAAELGSVRDSVPCGVSVGIMDTIPQLLDVVGGYLDEGYVRIKLKIEPGWDVEPVRAVRERFGDDVLLQVDANTAYTLGDAPQLARLDPFGLLLIEQPLEEEDVLGHAELARRIQTPICLDESIVSARAAADAIKLGAVQIVNIKPGRVGGYLEARRVHDVCAAHGIPVWCGGMIETGLGRAANVALASLPNFTLPGDTSASDRFYKTDITEPFVLSGGHLPVPTGPGLGVAPIPELLDEVTTAKVWIGS.

Residues S135 and 161-163 each bind 2-succinylbenzoate; that span reads KLK. K163 acts as the Proton donor in catalysis. D189 is a Mg(2+) binding site. Residue N191 coordinates 2-succinylbenzoate. Mg(2+) is bound by residues E214 and D239. Residue K263 is the Proton acceptor of the active site. Residue I293 participates in 2-succinylbenzoate binding.

It belongs to the mandelate racemase/muconate lactonizing enzyme family. MenC type 2 subfamily. Homooctamer. The cofactor is a divalent metal cation.

It carries out the reaction N-acetyl-D-methionine = N-acetyl-L-methionine. The catalysed reaction is (1R,6R)-6-hydroxy-2-succinyl-cyclohexa-2,4-diene-1-carboxylate = 2-succinylbenzoate + H2O. Its activity is regulated as follows. Inhibited by EDTA and sulfhydryl reagents such as p-chloromercuribenzoic acid. Both OSBS and NAAAR activities are inhibited competitively by salicylhydroxamate. Acts as a N-succinylamino acid racemase (NSAR) that catalyzes the racemization of N-succinyl-phenylglycine and N-succinyl-methionine. Can catalyze the racemization of a broad range of N-acylamino acids, including N-acetyl-D/L-methionine, N-propionyl-D/L-methionine, N-butyryl-D/L-methionine and N-chloroacetyl-L-valine. Also converts 2-succinyl-6-hydroxy-2,4-cyclohexadiene-1-carboxylate (SHCHC) to 2-succinylbenzoate (OSB). Catalyzes both N-succinylamino acid racemization and OSB synthesis at equivalent rates. NSAR is probably the biological function of this enzyme. The sequence is that of N-succinylamino acid racemase from Amycolatopsis sp.